The following is a 90-amino-acid chain: Small ribosomal subunit protein uS15c (90 aa).

It belongs to the universal ribosomal protein uS15 family. In terms of assembly, part of the 30S ribosomal subunit.

The protein localises to the plastid. It localises to the chloroplast. This chain is Small ribosomal subunit protein uS15c (rps15), found in Citrus sinensis (Sweet orange).